Consider the following 86-residue polypeptide: MVDEKAEVIKKFRTADNDTGSAFVQVALFTRRINNLTRHLQGFKKDYSSRLGLLKIISKRRRLLNYLAKNDCQGCKNLMEMLDIRK.

Belongs to the universal ribosomal protein uS15 family. Part of the 30S ribosomal subunit. Forms a bridge to the 50S subunit in the 70S ribosome, contacting the 23S rRNA.

Functionally, one of the primary rRNA binding proteins, it binds directly to 16S rRNA where it helps nucleate assembly of the platform of the 30S subunit by binding and bridging several RNA helices of the 16S rRNA. Forms an intersubunit bridge (bridge B4) with the 23S rRNA of the 50S subunit in the ribosome. The protein is Small ribosomal subunit protein uS15 of Neorickettsia sennetsu (strain ATCC VR-367 / Miyayama) (Ehrlichia sennetsu).